The primary structure comprises 188 residues: Elongation factor P (188 aa).

This sequence belongs to the elongation factor P family.

Its subcellular location is the cytoplasm. It functions in the pathway protein biosynthesis; polypeptide chain elongation. In terms of biological role, involved in peptide bond synthesis. Stimulates efficient translation and peptide-bond synthesis on native or reconstituted 70S ribosomes in vitro. Probably functions indirectly by altering the affinity of the ribosome for aminoacyl-tRNA, thus increasing their reactivity as acceptors for peptidyl transferase. This Pseudomonas aeruginosa (strain LESB58) protein is Elongation factor P.